Here is a 200-residue protein sequence, read N- to C-terminus: Snake venom serine protease VaSP1 (200 aa).

The Peptidase S1 domain maps to 1-200 (VIGGDECNIN…EIQGIVSYGK (200 aa)). Residues Asp88 and Ser182 each act as charge relay system in the active site.

In terms of assembly, monomer. N-glycosylated. The protein exist in multiple isoforms. As to expression, expressed by the venom gland.

It is found in the secreted. With respect to regulation, inhibited by Pefabloc (90% inhibition), DTT (90%), Zn(2+) (80%), trypsin inhibitor II (50%), and benzamidine (45%), but not inhibited by EDTA, Ca(2+), Mg(2+) and L-Cys. In terms of biological role, snake venom serine protease active on several blood coagulation enzymes. It completely cleaves fibrinogen Aalpha chain (FGA) after 120 minutes, partially cleaves Bbeta chain (FGB) (overnight) and has no activity on gamma chain. It does not release fibrinopeptides A and/or B exclusively, since the enzyme does not provoke fibrin polymerisation. It also degrades fibrin as efficiently as plasmin, and exhibits potent ability to cleave plasminogen and prothrombin, as well as heavy chain of factor X (F10). In vitro, it cleaves insulin B-chain (at positions His38-Leu39, Ala40-Leu41 and Tyr16-Leu17). This is Snake venom serine protease VaSP1 from Vipera ammodytes ammodytes (Western sand viper).